A 260-amino-acid polypeptide reads, in one-letter code: CD40 ligand (260 aa).

Over 1–22 (MIETYSQPSPRSVATGLPASMK) the chain is Cytoplasmic. The helical; Signal-anchor for type II membrane protein transmembrane segment at 23 to 46 (IFMYLLTVFLITQMIGSVLFAVYL) threads the bilayer. The Extracellular segment spans residues 47–260 (HRRLDKVEEE…GFSSFGLLKL (214 aa)). The 140-residue stretch at 121 to 260 (IAAHVVSEAN…GFSSFGLLKL (140 aa)) folds into the THD domain. Cysteines 177 and 217 form a disulfide. The N-linked (GlcNAc...) asparagine glycan is linked to asparagine 239.

Belongs to the tumor necrosis factor family. As to quaternary structure, homotrimer. Interacts with CD28. CD40 ligand, soluble form: Exists as either a monomer or a homotrimer. Forms a ternary complex between CD40 and integrins for CD40-CD40LG signaling. Post-translationally, the soluble form derives from the membrane form by proteolytic processing. As to expression, specifically expressed on activated CD4+ T-lymphocytes.

The protein resides in the cell membrane. It localises to the cell surface. The protein localises to the secreted. Functionally, cytokine that acts as a ligand to CD40/TNFRSF5. Costimulates T-cell proliferation and cytokine production. Its cross-linking on T-cells generates a costimulatory signal which enhances the production of IL4 and IL10 in conjunction with the TCR/CD3 ligation and CD28 costimulation. Induces the activation of NF-kappa-B. Induces the activation of kinases MAPK8 and PAK2 in T-cells. Mediates B-cell proliferation in the absence of co-stimulus as well as IgE production in the presence of IL4. Involved in immunoglobulin class switching. In terms of biological role, acts as a ligand for integrins, specifically ITGA5:ITGB1 and ITGAV:ITGB3; both integrins and the CD40 receptor are required for activation of CD40-CD40LG signaling, which have cell-type dependent effects, such as B-cell activation, NF-kappa-B signaling and anti-apoptotic signaling. This Mus musculus (Mouse) protein is CD40 ligand (Cd40lg).